Consider the following 386-residue polypeptide: DNA-directed RNA polymerase subunit Rpo1C (386 aa).

It belongs to the RNA polymerase beta' chain family. In terms of assembly, part of the RNA polymerase complex.

Its subcellular location is the cytoplasm. It catalyses the reaction RNA(n) + a ribonucleoside 5'-triphosphate = RNA(n+1) + diphosphate. In terms of biological role, DNA-dependent RNA polymerase (RNAP) catalyzes the transcription of DNA into RNA using the four ribonucleoside triphosphates as substrates. Forms part of the jaw domain. In Methanococcus vannielii (strain ATCC 35089 / DSM 1224 / JCM 13029 / OCM 148 / SB), this protein is DNA-directed RNA polymerase subunit Rpo1C.